We begin with the raw amino-acid sequence, 141 residues long: Putative pre-16S rRNA nuclease (141 aa).

Belongs to the YqgF nuclease family.

The protein localises to the cytoplasm. In terms of biological role, could be a nuclease involved in processing of the 5'-end of pre-16S rRNA. This chain is Putative pre-16S rRNA nuclease, found in Sodalis glossinidius (strain morsitans).